The primary structure comprises 377 residues: Modification methylase CviBIII (377 aa).

This sequence belongs to the N(4)/N(6)-methyltransferase family.

It catalyses the reaction a 2'-deoxyadenosine in DNA + S-adenosyl-L-methionine = an N(6)-methyl-2'-deoxyadenosine in DNA + S-adenosyl-L-homocysteine + H(+). Its function is as follows. A gamma subtype methylase that recognizes the double-stranded sequence 5'-TCGA-3' and methylates A-4 on both strands. The protein is Modification methylase CviBIII (CVIBIIIM) of Paramecium bursaria Chlorella virus NC1A (PBCV-NC1A).